The sequence spans 124 residues: Small ribosomal subunit protein uS12 (124 aa).

Positions 1–32 (MPTIQQLVRKGREDKVVKTKTPALKGSPQRRG) are disordered. D89 bears the 3-methylthioaspartic acid mark. Residues 105 to 124 (QGVKNRKQARSRYGAKKEKS) are disordered. Residues 108-118 (KNRKQARSRYG) are compositionally biased toward basic residues.

This sequence belongs to the universal ribosomal protein uS12 family. As to quaternary structure, part of the 30S ribosomal subunit. Contacts proteins S8 and S17. May interact with IF1 in the 30S initiation complex.

In terms of biological role, with S4 and S5 plays an important role in translational accuracy. Functionally, interacts with and stabilizes bases of the 16S rRNA that are involved in tRNA selection in the A site and with the mRNA backbone. Located at the interface of the 30S and 50S subunits, it traverses the body of the 30S subunit contacting proteins on the other side and probably holding the rRNA structure together. The combined cluster of proteins S8, S12 and S17 appears to hold together the shoulder and platform of the 30S subunit. This Kineococcus radiotolerans (strain ATCC BAA-149 / DSM 14245 / SRS30216) protein is Small ribosomal subunit protein uS12.